The following is an 85-amino-acid chain: Large ribosomal subunit protein bL27 (85 aa).

The segment at 1–20 (MATKKAGGSTRNGRDSEAKR) is disordered.

This sequence belongs to the bacterial ribosomal protein bL27 family.

In Actinobacillus pleuropneumoniae serotype 5b (strain L20), this protein is Large ribosomal subunit protein bL27.